The primary structure comprises 175 residues: Regenerating islet-derived protein 3-alpha (175 aa).

Positions 1–26 (MLPHLVLNSISWMLLSCLLFVFQVQG) are cleaved as a signal peptide. Residues 27–37 (EDFQKEVPSPR) constitute a propeptide that is removed on maturation. Cystine bridges form between C40–C51, C68–C171, and C146–C163. Residues 47–172 (YRSHCYALVM…CDGTLPFVCK (126 aa)) form the C-type lectin domain. Positions 50, 107, 121, and 145 each coordinate Zn(2+). The tract at residues 103-118 (WIGLHDPTMGQQPNGG) is sufficient to activate EXTL3.

In terms of assembly, forms a hexameric membrane-permeabilizing oligomeric pore on membrane phospholipids. The hexamer is formed by three dimers related by helical symmetry. Forms filaments, filamentation traps pore complexes and limits damage to host cells. Interacts with EXTL3. Proteolytic processing by trypsin removes an inhibitory N-terminal propeptide and is essential for peptidoglycan binding and antibacterial activity. Small intestine and pancreas.

It localises to the secreted. Functionally, bactericidal C-type lectin. The lack of the EPN motif may explain its inability to bind peptidoglycan. In terms of biological role, acts as a hormone in response to different stimuli like anti-inflammatory signals, such as IL17A, or gut microbiome. Secreted by different cell types to activate its receptor EXTL3 and induce cell specific signaling pathways. Induced by IL17A in keratinocytes, regulates keratinocyte proliferation and differentiation after skin injury via activation of EXTL3-PI3K-AKT signaling pathway. In parallel, inhibits skin inflammation through the inhibition of inflammatory cytokines such as IL6 and TNF. In pancreas, is able to permealize beta-cells membrane and stimulate their proliferation. In Mus musculus (Mouse), this protein is Regenerating islet-derived protein 3-alpha (Reg3a).